We begin with the raw amino-acid sequence, 192 residues long: ATP synthase protein MI25 (192 aa).

Residues isoleucine 29–serine 49 form a helical membrane-spanning segment.

This sequence belongs to the ATPase protein MI25 family. F-type ATPases have 2 components, CF(1) - the catalytic core - and CF(0) - the membrane proton channel. CF(1) has five subunits: alpha(3), beta(3), gamma(1), delta(1), epsilon(1). CF(0) has three main subunits: a, b and c.

It is found in the mitochondrion membrane. Functionally, this is one of the chains of the nonenzymatic component (CF(0) subunit) of the mitochondrial ATPase complex. The chain is ATP synthase protein MI25 from Triticum timopheevii (Timopheev's wheat).